A 288-amino-acid polypeptide reads, in one-letter code: Baseplate protein gp9 (288 aa).

The stretch at 20 to 80 forms a coiled coil; that stretch reads TGDILFDGGN…SITEYATPVK (61 aa).

Homotrimer. The gp9 trimer interacts with the long tail fiber (LTF) that comprises gp34 trimer, gp35, gp36 and a gp37 trimer. Part of the baseplate macromolecular complex which consists of gp5, gp5.4, gp27 (central spike complex); gp6, gp25, gp53 (inner baseplate); gp7, gp8 (intermediate baseplate); gp9, gp10, gp11, gp12 (peripheral); gp48 and gp54 (proximal region of the tail tube).

The protein resides in the virion. Its function is as follows. Peripheral baseplate protein that is part of the tail fiber network. Connects the long tail fibers to the baseplate and, after virus attachment to a host cell, probably changes its conformation to trigger the signal for tail contraction. Involved in the tail assembly. In Enterobacteria phage T4 (Bacteriophage T4), this protein is Baseplate protein gp9 (9).